We begin with the raw amino-acid sequence, 814 residues long: Rho GTPase-activating protein 44 (814 aa).

The BAR domain maps to 14-249; it reads QTVGRAEKTE…IKAQQEAWVE (236 aa). Positions 255–445 constitute a Rho-GAP domain; that stretch reads KPLEEHLMIS…PIIQHADWFF (191 aa). Disordered regions lie at residues 467-493, 528-769, and 784-814; these read ANYS…RPLS, RGSS…MSTD, and STLR…STAL. A compositionally biased stretch (basic and acidic residues) spans 479–489; that stretch reads PADRRQPEQAR. Ser-493 is subject to Phosphoserine. Low complexity-rich tracts occupy residues 567–581, 598–612, 622–637, 684–704, and 741–752; these read SPAT…SGAS, SPGS…SIQG, PQPA…DQSP, SPYG…LSPA, and SVSLSASSPQST. Positions 727-814 are interaction with BST2; the sequence is KPRQRPTLPP…SEEESESTAL (88 aa). Positions 790-805 are enriched in basic and acidic residues; the sequence is PLEHARRHSATDKRDS. Position 805 is a phosphoserine (Ser-805). The short motif at 811–814 is the PDZ-binding element; sequence STAL.

As to quaternary structure, interacts with BST2 (via cytoplasmic domain). Interacts (probably via PDZ-binding motif) with SHANK3 (via PDZ domain); the interaction takes place in dendritic spines and promotes GRIA1 exocytosis. In terms of tissue distribution, specifically expressed in brain (at protein level). Detected in olfactory bulb, cortex, hippocampus, diencephalon and cerebellum (at protein level). Expressed in hippocampal neurons (at protein level).

The protein resides in the cell projection. Its subcellular location is the dendritic spine. It localises to the recycling endosome. It is found in the presynapse. The protein localises to the dendrite. GTPase-activating protein (GAP) that stimulates the GTPase activity of Rho-type GTPases. Thereby, controls Rho-type GTPases cycling between their active GTP-bound and inactive GDP-bound states. Acts as a GAP at least for CDC42 and RAC1. In neurons, is involved in dendritic spine formation and synaptic plasticity in a specific RAC1-GAP activity. Limits the initiation of exploratory dendritic filopodia. Recruited to actin-patches that seed filopodia, binds specifically to plasma membrane sections that are deformed inward by acto-myosin mediated contractile forces. Acts through GAP activity on RAC1 to reduce actin polymerization necessary for filopodia formation. In association with SHANK3, promotes GRIA1 exocytosis from recycling endosomes and spine morphological changes associated to long-term potentiation. The polypeptide is Rho GTPase-activating protein 44 (Mus musculus (Mouse)).